A 393-amino-acid chain; its full sequence is Putative serpin-Z6A (393 aa).

An RCL region spans residues Gly336–Arg360.

Belongs to the serpin family.

Its function is as follows. Probable serine protease inhibitor. The protein is Putative serpin-Z6A of Oryza sativa subsp. japonica (Rice).